Reading from the N-terminus, the 265-residue chain is Polyglutamine-binding protein 1 (265 aa).

Residues 46–80 (EGLPPSWYKVFDPSCGLPYYWNADTDLVSWLSPHD) form the WW domain. Serine 94 carries the phosphoserine modification. Residues 94-265 (SSNADAEEKL…AEASRTKQQD (172 aa)) are disordered. A compositionally biased stretch (basic and acidic residues) spans 99–175 (AEEKLDRSHD…DKADREEGKE (77 aa)). 15 repeat units span residues 104–110 (DRSHDKS), 111–117 (DRGHDKS), 118–124 (DRSHEKP), 125–131 (DRGHDKS), 132–138 (DRGHDKS), 139–140 (DR), 141–142 (DR), 143–144 (ER), 150–151 (DR), 152–153 (ER), 154–155 (ER), 156–157 (DR), 158–159 (ER), 160–161 (DR), and 162–163 (DR). A 5 X 7 AA approximate tandem repeats of D-R-[SG]-H-D-K-S region spans residues 104–138 (DRSHDKSDRGHDKSDRSHEKPDRGHDKSDRGHDKS). The interval 139–144 (DRDRER) is 3 X 2 AA tandem repeats of [DE]-R. A 7 X 2 AA tandem repeats of [DE]-R region spans residues 150-163 (DRERERDRERDRDR). Positions 245 to 255 (YPSPGAVLRAN) are important for interaction with TXNL4A. At serine 247 the chain carries Phosphoserine.

As to quaternary structure, interacts with POU3F2/Brn-2, ATXN1, TXNL4A, HTT and AR. Interaction with ATXN1 correlates positively with the length of the polyglutamine tract. Interacts with RNA polymerase II large subunit in a phosphorylation-dependent manner. Forms a ternary complex with ATXN1 mutant and phosphorylated RNA polymerase II. Interacts (via C-terminus) with TXNL4A and CD2BP2. Interacts (via WW domain) with ATN1 and SF3B1, and may interact with additional splice factors. Interacts (via WW domain) with WBP11; Leading to reduce interaction between PQBP1 and TXNL4A. Interacts with CAPRIN1. Interacts with DDX1. Interacts with SFPQ. Interacts with KHSRP.

Its subcellular location is the nucleus. The protein localises to the nucleus speckle. It localises to the cytoplasmic granule. Its function is as follows. Intrinsically disordered protein that acts as a scaffold, and which is involved in different processes, such as pre-mRNA splicing, transcription regulation, innate immunity and neuron development. Interacts with splicing-related factors via the intrinsically disordered region and regulates alternative splicing of target pre-mRNA species. May suppress the ability of POU3F2 to transactivate the DRD1 gene in a POU3F2 dependent manner. Can activate transcription directly or via association with the transcription machinery. May be involved in ATXN1 mutant-induced cell death. The interaction with ATXN1 mutant reduces levels of phosphorylated RNA polymerase II large subunit. Involved in the assembly of cytoplasmic stress granule, possibly by participating in the transport of neuronal RNA granules. Also acts as an innate immune sensor of infection by retroviruses, by detecting the presence of reverse-transcribed DNA in the cytosol. Directly binds retroviral reverse-transcribed DNA in the cytosol and interacts with CGAS, leading to activate the cGAS-STING signaling pathway, triggering type-I interferon production. This chain is Polyglutamine-binding protein 1 (PQBP1), found in Pongo pygmaeus (Bornean orangutan).